The following is a 340-amino-acid chain: Ribonucleoside-diphosphate reductase subunit beta (340 aa).

Fe cation is bound by residues Asp-88 and His-122. Tyr-126 is an active-site residue. His-216 serves as a coordination point for Fe cation.

This sequence belongs to the ribonucleoside diphosphate reductase small chain family. Tetramer of two alpha and two beta subunits. The cofactor is Fe cation.

The enzyme catalyses a 2'-deoxyribonucleoside 5'-diphosphate + [thioredoxin]-disulfide + H2O = a ribonucleoside 5'-diphosphate + [thioredoxin]-dithiol. Provides the precursors necessary for DNA synthesis. Catalyzes the biosynthesis of deoxyribonucleotides from the corresponding ribonucleotides. This Mycoplasma genitalium (strain ATCC 33530 / DSM 19775 / NCTC 10195 / G37) (Mycoplasmoides genitalium) protein is Ribonucleoside-diphosphate reductase subunit beta (nrdF).